A 277-amino-acid polypeptide reads, in one-letter code: Elongation factor Ts (277 aa).

The interval 81–84 (TDFV) is involved in Mg(2+) ion dislocation from EF-Tu.

The protein belongs to the EF-Ts family.

The protein localises to the cytoplasm. Functionally, associates with the EF-Tu.GDP complex and induces the exchange of GDP to GTP. It remains bound to the aminoacyl-tRNA.EF-Tu.GTP complex up to the GTP hydrolysis stage on the ribosome. The polypeptide is Elongation factor Ts (Amoebophilus asiaticus (strain 5a2)).